Consider the following 329-residue polypeptide: Beta-ketoacyl-[acyl-carrier-protein] synthase III (329 aa).

Active-site residues include Cys114 and His255. The ACP-binding stretch occupies residues 256 to 260 (QANQR). Asn285 is a catalytic residue.

This sequence belongs to the thiolase-like superfamily. FabH family. In terms of assembly, homodimer.

It is found in the cytoplasm. The enzyme catalyses malonyl-[ACP] + acetyl-CoA + H(+) = 3-oxobutanoyl-[ACP] + CO2 + CoA. Its pathway is lipid metabolism; fatty acid biosynthesis. In terms of biological role, catalyzes the condensation reaction of fatty acid synthesis by the addition to an acyl acceptor of two carbons from malonyl-ACP. Catalyzes the first condensation reaction which initiates fatty acid synthesis and may therefore play a role in governing the total rate of fatty acid production. Possesses both acetoacetyl-ACP synthase and acetyl transacylase activities. Its substrate specificity determines the biosynthesis of branched-chain and/or straight-chain of fatty acids. This Trichodesmium erythraeum (strain IMS101) protein is Beta-ketoacyl-[acyl-carrier-protein] synthase III.